Reading from the N-terminus, the 561-residue chain is Ribulokinase (561 aa).

It belongs to the ribulokinase family.

It catalyses the reaction D-ribulose + ATP = D-ribulose 5-phosphate + ADP + H(+). It carries out the reaction L-ribulose + ATP = L-ribulose 5-phosphate + ADP + H(+). It participates in carbohydrate degradation; L-arabinose degradation via L-ribulose; D-xylulose 5-phosphate from L-arabinose (bacterial route): step 2/3. The sequence is that of Ribulokinase from Shouchella clausii (strain KSM-K16) (Alkalihalobacillus clausii).